Reading from the N-terminus, the 398-residue chain is uncharacterized protein (398 aa).

10 consecutive transmembrane segments (helical) span residues 43–65 (PILP…VGGL), 89–108 (IFVV…LGLS), 156–173 (TAGA…ILYL), 180–198 (IILI…LYFV), 224–246 (LFIL…ILRA), 259–281 (IIIP…IPFG), 291–311 (SVLT…AYFI), 316–338 (LILL…KAYV), 351–373 (LGLF…GYLW), and 380–397 (TFLY…LLLF).

This sequence belongs to the major facilitator superfamily.

The protein resides in the cell membrane. This is an uncharacterized protein from Methanocaldococcus jannaschii (strain ATCC 43067 / DSM 2661 / JAL-1 / JCM 10045 / NBRC 100440) (Methanococcus jannaschii).